The primary structure comprises 242 residues: Platinum sensitivity protein 3 (242 aa).

As to quaternary structure, component of the SHU complex composed of at least CSM2, PSY3, SHU1 and SHU2.

Its subcellular location is the nucleus. Functionally, required for resistance to the DNA-damaging agents methyl methanesulfonate (MMS), cisplatin and oxaliplatin, but not to mitomycin C. Plays a role in protection against mutation accumulation. May be a component of the recombination-repair pathway. In Saccharomyces cerevisiae (strain ATCC 204508 / S288c) (Baker's yeast), this protein is Platinum sensitivity protein 3 (PSY3).